A 248-amino-acid chain; its full sequence is MTIKNKVIIITGASSGIGKATALLLAEKGAKLVLAARRVEKLEKIVQTIKANSGEAIFAKTDVTKREDNKKLVELAIERYGKVDAIFLNAGIMPNSPLSALKEDEWEQMIDINIKGVLNGIAAVLPSFIAQKSGHIIATSSVAGLKAYPGGAVYGATKWAVRDLMEVLRMESAQEGTNIRTVTIYPAAINTELLETITDKETEQGMTSLYKQYGITPDRIASIVAYAIDQPEDVNVNEFTVGPTSQPW.

Residue 9 to 33 participates in NADP(+) binding; it reads IITGASSGIGKATALLLAEKGAKLV. S141 is a substrate binding site. Y154 functions as the Proton acceptor in the catalytic mechanism.

The protein belongs to the short-chain dehydrogenases/reductases (SDR) family.

This is an uncharacterized protein from Listeria monocytogenes serovar 1/2a (strain ATCC BAA-679 / EGD-e).